The following is a 295-amino-acid chain: Pyridoxal 5'-phosphate synthase subunit PdxS (295 aa).

Aspartate 25 provides a ligand contact to D-ribose 5-phosphate. The Schiff-base intermediate with D-ribose 5-phosphate role is filled by lysine 82. Residue glycine 154 participates in D-ribose 5-phosphate binding. D-glyceraldehyde 3-phosphate is bound at residue arginine 166. D-ribose 5-phosphate is bound by residues glycine 215 and 236–237 (GS).

The protein belongs to the PdxS/SNZ family. As to quaternary structure, in the presence of PdxT, forms a dodecamer of heterodimers.

The catalysed reaction is aldehydo-D-ribose 5-phosphate + D-glyceraldehyde 3-phosphate + L-glutamine = pyridoxal 5'-phosphate + L-glutamate + phosphate + 3 H2O + H(+). It participates in cofactor biosynthesis; pyridoxal 5'-phosphate biosynthesis. Functionally, catalyzes the formation of pyridoxal 5'-phosphate from ribose 5-phosphate (RBP), glyceraldehyde 3-phosphate (G3P) and ammonia. The ammonia is provided by the PdxT subunit. Can also use ribulose 5-phosphate and dihydroxyacetone phosphate as substrates, resulting from enzyme-catalyzed isomerization of RBP and G3P, respectively. The chain is Pyridoxal 5'-phosphate synthase subunit PdxS from Natranaerobius thermophilus (strain ATCC BAA-1301 / DSM 18059 / JW/NM-WN-LF).